Reading from the N-terminus, the 287-residue chain is Large ribosomal subunit protein uL2 (287 aa).

Residues 214-287 are disordered; the sequence is LGRRPEVRGS…SKRGRGGRDA (74 aa). The span at 271–287 shows a compositional bias: basic residues; that stretch reads QRRRRKSSKRGRGGRDA.

Belongs to the universal ribosomal protein uL2 family. As to quaternary structure, part of the 50S ribosomal subunit. Forms a bridge to the 30S subunit in the 70S ribosome.

Its function is as follows. One of the primary rRNA binding proteins. Required for association of the 30S and 50S subunits to form the 70S ribosome, for tRNA binding and peptide bond formation. It has been suggested to have peptidyltransferase activity; this is somewhat controversial. Makes several contacts with the 16S rRNA in the 70S ribosome. The protein is Large ribosomal subunit protein uL2 of Synechococcus elongatus (strain ATCC 33912 / PCC 7942 / FACHB-805) (Anacystis nidulans R2).